Reading from the N-terminus, the 164-residue chain is Sec-independent protein translocase protein TatB (164 aa).

Residues 1–21 (MIDIGLSKMALIGAVALIVIG) traverse the membrane as a helical segment. Residues 81-102 (ASEFQKDWESGTSDAAATGHDG) are disordered.

It belongs to the TatB family. As to quaternary structure, the Tat system comprises two distinct complexes: a TatABC complex, containing multiple copies of TatA, TatB and TatC subunits, and a separate TatA complex, containing only TatA subunits. Substrates initially bind to the TatABC complex, which probably triggers association of the separate TatA complex to form the active translocon.

Its subcellular location is the cell inner membrane. Part of the twin-arginine translocation (Tat) system that transports large folded proteins containing a characteristic twin-arginine motif in their signal peptide across membranes. Together with TatC, TatB is part of a receptor directly interacting with Tat signal peptides. TatB may form an oligomeric binding site that transiently accommodates folded Tat precursor proteins before their translocation. The protein is Sec-independent protein translocase protein TatB of Paracidovorax citrulli (strain AAC00-1) (Acidovorax citrulli).